Here is a 360-residue protein sequence, read N- to C-terminus: ASTRA-associated protein 1 (360 aa).

WD repeat units lie at residues 9 to 46, 49 to 86, 167 to 205, and 317 to 357; these read AHAAPVSGFCPWENQLVSADRSGTLIVWNLSTRRPAAR, AHEGQVLSMQPTRFGLLTHGRDSAVRIWPPGAAENSKG, RGEGIIMRLAWAAPDLLYVGYESGALASFSLSPEGCRML, and PEQS…ENGL.

Belongs to the WD repeat ASA1 family. As to quaternary structure, component of the ASTRA chromatin remodeling machinery complex.

It localises to the nucleus. Functionally, component of the ASTRA complex involved in chromatin remodeling. This chain is ASTRA-associated protein 1 (ASA1), found in Clavispora lusitaniae (strain ATCC 42720) (Yeast).